A 520-amino-acid chain; its full sequence is L-tyrosine:2-oxoglutarate aminotransferase amt1 (520 aa).

Belongs to the class-I pyridoxal-phosphate-dependent aminotransferase family. Requires pyridoxal 5'-phosphate as cofactor.

The enzyme catalyses L-tyrosine + 2-oxoglutarate = 3-(4-hydroxyphenyl)pyruvate + L-glutamate. It participates in secondary metabolite biosynthesis. An L-tyrosine:2-oxoglutarate aminotransferase (probably amt1) and atromentin synthetase nps3 catalyze consecutive steps to turn over L-tyrosine into atromentin, which represents the generic precursor molecule for the entire terphenylquinone and pulvinic acid family of pigments, which are widely distributed secondary metabolites in homobasidiomycetes. The first step catalyzed by amt1 converts L-tyrosine in to 4-hydroxyphenylpyruvate (4-HPP). Adenylation of two 4-HPP monomers by the nps3 adenylation (A) domain, covalent tethering of the monomers as a thioester and oxoester onto the nps3 thiolation (T) and thioesterase (TE) domains, respectively, and symmetric C-C-bond formation between two monomers catalyzed by the nps3 TE domain leads to atromentin. Follow-up products of atromentin in S.lacrymans include atromentic acid, xerocomic acid, isoxerocomic acid and variegatic acid. This chain is L-tyrosine:2-oxoglutarate aminotransferase amt1 (amt1), found in Serpula lacrymans var. lacrymans (strain S7.9) (Dry rot fungus).